Here is a 152-residue protein sequence, read N- to C-terminus: Keratin, high-sulfur matrix protein, B2C (152 aa).

The residue at position 2 (A2) is an N-acetylalanine. 3 consecutive repeats follow at residues 27–36 (STCSQTSCCQ), 37–46 (PTSIQTSCCQ), and 47–56 (PTCLQTSGCE).

Functionally, the keratin products of mammalian epidermal derivatives such as wool and hair consist of microfibrils embedded in a rigid matrix of other proteins. The matrix proteins include the high-sulfur and high-tyrosine keratins, having molecular weights of 6-20 kDa, whereas the microfibrils contain the larger, low-sulfur keratins (40-56 kDa). The protein is Keratin, high-sulfur matrix protein, B2C of Ovis aries (Sheep).